The sequence spans 307 residues: Myeloid-associated differentiation marker-like protein 2 (307 aa).

2 consecutive MARVEL domains span residues 17 to 154 (AVTS…ARPG) and 159 to 303 (YMAT…RIRF). The next 7 membrane-spanning stretches (helical) occupy residues 53 to 73 (FCVA…ACEF), 90 to 110 (AFAM…PLYF), 129 to 149 (LAAS…VALT), 163 to 183 (VSGL…GALV), 198 to 218 (VAVY…SVLG), 232 to 252 (VVYT…WPVF), and 278 to 298 (LVVA…LAYS).

Belongs to the MAL family.

Its subcellular location is the membrane. The polypeptide is Myeloid-associated differentiation marker-like protein 2 (MYADML2) (Bos taurus (Bovine)).